A 366-amino-acid chain; its full sequence is uncharacterized protein (366 aa).

Glu139 functions as the Proton donor in the catalytic mechanism. Glu249 functions as the Nucleophile in the catalytic mechanism.

Belongs to the glycosyl hydrolase 53 family.

This is an uncharacterized protein from Niallia circulans (Bacillus circulans).